The chain runs to 742 residues: UPF0313 protein MA_4618 (742 aa).

The interval 1-125 is disordered; sequence MGVRKQTMVK…SFSSSLPASK (125 aa). The interval 1-128 is unknown; it reads MGVRKQTMVK…SSLPASKFLP (128 aa). 2 stretches are compositionally biased toward basic and acidic residues: residues 17–40 and 49–73; these read ENKK…ERAG and KKVE…KAEG. Over residues 106–115 the composition is skewed to basic residues; sequence TGKKEKKQKK. The segment at 129 to 742 is UPF0313; the sequence is MSPEEVKARG…KCLIRRKEKQ (614 aa). The 270-residue stretch at 438–707 folds into the Radical SAM core domain; it reads ALEMVKFSLT…AMQRALMHYR (270 aa). [4Fe-4S] cluster is bound by residues cysteine 452, cysteine 456, and cysteine 459.

In the C-terminal section; belongs to the UPF0313 family. Requires [4Fe-4S] cluster as cofactor.

The sequence is that of UPF0313 protein MA_4618 from Methanosarcina acetivorans (strain ATCC 35395 / DSM 2834 / JCM 12185 / C2A).